Reading from the N-terminus, the 225-residue chain is UPF0758 protein BCB4264_A4572 (225 aa).

The 123-residue stretch at 103-225 folds into the MPN domain; sequence SIRSPEDCAK…FVSLKEKGHI (123 aa). Positions 174, 176, and 187 each coordinate Zn(2+). A JAMM motif motif is present at residues 174–187; sequence HNHPSGDPTPSRED.

The protein belongs to the UPF0758 family.

The protein is UPF0758 protein BCB4264_A4572 of Bacillus cereus (strain B4264).